A 304-amino-acid chain; its full sequence is UDP-N-acetylenolpyruvoylglucosamine reductase (304 aa).

The region spanning 31–196 (KVGGPADYLA…ISAKFNLKPG (166 aa)) is the FAD-binding PCMH-type domain. Residue Arg175 is part of the active site. Catalysis depends on Ser225, which acts as the Proton donor. Glu295 is a catalytic residue.

Belongs to the MurB family. The cofactor is FAD.

Its subcellular location is the cytoplasm. It catalyses the reaction UDP-N-acetyl-alpha-D-muramate + NADP(+) = UDP-N-acetyl-3-O-(1-carboxyvinyl)-alpha-D-glucosamine + NADPH + H(+). It participates in cell wall biogenesis; peptidoglycan biosynthesis. In terms of biological role, cell wall formation. The sequence is that of UDP-N-acetylenolpyruvoylglucosamine reductase from Streptococcus thermophilus (strain CNRZ 1066).